The primary structure comprises 292 residues: MRNTSKEVQSTSYRYAPCDWYYHLPVKRSEKPVGAPPASQIPGLSDLRDSPSVNLPRARRYWIKETDSEYVKLAKQGGRPDLLKHFAPGTRQGSPVAYSLPDWYIHHSKPPTSLQREVPAVSIPEYMVYEEFNPDQANGSYESRQGPFDFDRKTIWQREAEELENVKRKVKLPAINSKNSSKAGTPVNNKDSDKSRLSLPPMPGPKTGSPTNFSKLISNGYKDEWLQQQKADSDRRTPKTSEASVSTQSTEDSKSKSSQDTETPQNSETPEGSEKTPDAEAPPSEATPEELK.

Disordered stretches follow at residues 29–50 (SEKPVGAPPASQIPGLSDLRDS) and 166–292 (VKRK…EELK). A Phosphoserine modification is found at serine 50. Polar residues-rich tracts occupy residues 176-189 (NSKNSSKAGTPVNN) and 208-217 (GSPTNFSKLI). Over residues 221–239 (YKDEWLQQQKADSDRRTPK) the composition is skewed to basic and acidic residues. 2 stretches are compositionally biased toward polar residues: residues 240-250 (TSEASVSTQST) and 260-270 (DTETPQNSETP).

Phosphorylated upon DNA damage.

This is an uncharacterized protein from Rattus norvegicus (Rat).